Consider the following 179-residue polypeptide: MSIPFSNTHYRIPQGFGNLLEGLTREILREQPDNIPAFAAAYFENLLEKREKTNFDPAEWGAKVDDRFYNNHAFKDEPPEKSETQKIQPEKVAIEKETMPQETVKEKETQVSFVEEPTEEPQKEEEEEEDEEDLEGLLVREGMQDAAVKIQAVFRGHKTRKEYLKKRDSTDETADENNE.

Residues 72-109 (HAFKDEPPEKSETQKIQPEKVAIEKETMPQETVKEKET) show a composition bias toward basic and acidic residues. 2 disordered regions span residues 72–138 (HAFK…EGLL) and 159–179 (TRKEYLKKRDSTDETADENNE). Acidic residues predominate over residues 116-135 (EPTEEPQKEEEEEEDEEDLE). An IQ domain is found at 143 to 172 (MQDAAVKIQAVFRGHKTRKEYLKKRDSTDE). Residues 161 to 170 (KEYLKKRDST) show a composition bias toward basic and acidic residues.

Homodimer. May interact with ROPN1. Testis- and sperm-specific.

It is found in the membrane. In terms of biological role, sperm surface zona pellucida binding protein. Helps to bind spermatozoa to the zona pellucida with high affinity. Might function in binding zona pellucida and carbohydrates. In Monodelphis domestica (Gray short-tailed opossum), this protein is Sperm surface protein Sp17 (SPA17).